The following is a 192-amino-acid chain: Adenylate kinase (192 aa).

Gly11–Thr16 lines the ATP pocket. The NMP stretch occupies residues Ser31–Val60. Residues Thr32, Arg37, Asp58–Val60, Gly86–Arg89, and Gln93 contribute to the AMP site. Residues Gly127 to Asp137 are LID. Position 128 (Arg128) interacts with ATP. Residues Arg134 and Arg145 each coordinate AMP. Gly173 lines the ATP pocket.

Belongs to the adenylate kinase family. In terms of assembly, monomer.

It localises to the cytoplasm. The enzyme catalyses AMP + ATP = 2 ADP. The protein operates within purine metabolism; AMP biosynthesis via salvage pathway; AMP from ADP: step 1/1. Functionally, catalyzes the reversible transfer of the terminal phosphate group between ATP and AMP. Plays an important role in cellular energy homeostasis and in adenine nucleotide metabolism. The protein is Adenylate kinase of Pseudarthrobacter chlorophenolicus (strain ATCC 700700 / DSM 12829 / CIP 107037 / JCM 12360 / KCTC 9906 / NCIMB 13794 / A6) (Arthrobacter chlorophenolicus).